The following is a 287-amino-acid chain: NAD kinase (287 aa).

Residue D70 is the Proton acceptor of the active site. Residues D70–G71, N144–D145, R155, K172, D174, T185–S190, and Q244 each bind NAD(+).

This sequence belongs to the NAD kinase family. A divalent metal cation is required as a cofactor.

It localises to the cytoplasm. It catalyses the reaction NAD(+) + ATP = ADP + NADP(+) + H(+). Functionally, involved in the regulation of the intracellular balance of NAD and NADP, and is a key enzyme in the biosynthesis of NADP. Catalyzes specifically the phosphorylation on 2'-hydroxyl of the adenosine moiety of NAD to yield NADP. The protein is NAD kinase of Solibacter usitatus (strain Ellin6076).